The chain runs to 118 residues: Large ribosomal subunit protein uL22 (118 aa).

Belongs to the universal ribosomal protein uL22 family. As to quaternary structure, part of the 50S ribosomal subunit.

Functionally, this protein binds specifically to 23S rRNA; its binding is stimulated by other ribosomal proteins, e.g. L4, L17, and L20. It is important during the early stages of 50S assembly. It makes multiple contacts with different domains of the 23S rRNA in the assembled 50S subunit and ribosome. Its function is as follows. The globular domain of the protein is located near the polypeptide exit tunnel on the outside of the subunit, while an extended beta-hairpin is found that lines the wall of the exit tunnel in the center of the 70S ribosome. This is Large ribosomal subunit protein uL22 from Prosthecochloris aestuarii (strain DSM 271 / SK 413).